Reading from the N-terminus, the 218-residue chain is Small ribosomal subunit protein uS3c (218 aa).

The KH type-2 domain occupies 47-118 (VQKNIRISSG…KLNIAITRIS (72 aa)).

Belongs to the universal ribosomal protein uS3 family. Part of the 30S ribosomal subunit.

The protein resides in the plastid. It localises to the chloroplast. This is Small ribosomal subunit protein uS3c (rps3) from Aethionema cordifolium (Lebanon stonecress).